Here is a 324-residue protein sequence, read N- to C-terminus: tRNA uridine(34) hydroxylase (324 aa).

In terms of domain architecture, Rhodanese spans 145 to 239; sequence NDKKTIFIDM…YVHDARKNGL (95 aa). The active-site Cysteine persulfide intermediate is C199.

The protein belongs to the TrhO family.

It carries out the reaction uridine(34) in tRNA + AH2 + O2 = 5-hydroxyuridine(34) in tRNA + A + H2O. In terms of biological role, catalyzes oxygen-dependent 5-hydroxyuridine (ho5U) modification at position 34 in tRNAs. This chain is tRNA uridine(34) hydroxylase, found in Buchnera aphidicola subsp. Acyrthosiphon pisum (strain APS) (Acyrthosiphon pisum symbiotic bacterium).